The sequence spans 162 residues: uncharacterized protein (162 aa).

A helical membrane pass occupies residues 5–25 (IIILFLFTAILCSITLCGCIS).

Its subcellular location is the membrane. This is an uncharacterized protein from Methanocaldococcus jannaschii (strain ATCC 43067 / DSM 2661 / JAL-1 / JCM 10045 / NBRC 100440) (Methanococcus jannaschii).